Consider the following 403-residue polypeptide: Protein-export membrane protein SecD (403 aa).

The next 6 membrane-spanning stretches (helical) occupy residues 14 to 34 (VILL…MGIQ), 238 to 258 (FAEG…VILI), 265 to 285 (ILVL…LGAA), 294 to 314 (LAAI…QIII), 336 to 356 (FFII…LAYI), and 365 to 385 (IGLL…GVFI).

Belongs to the SecD/SecF family. SecD subfamily. As to quaternary structure, part of the protein translocation apparatus. Forms a complex with SecF.

The protein localises to the cell membrane. Involved in protein export. The protein is Protein-export membrane protein SecD of Methanothermobacter thermautotrophicus (strain ATCC 29096 / DSM 1053 / JCM 10044 / NBRC 100330 / Delta H) (Methanobacterium thermoautotrophicum).